Consider the following 120-residue polypeptide: Large ribosomal subunit protein bL12 (120 aa).

Belongs to the bacterial ribosomal protein bL12 family. As to quaternary structure, homodimer. Part of the ribosomal stalk of the 50S ribosomal subunit. Forms a multimeric L10(L12)X complex, where L10 forms an elongated spine to which 2 to 4 L12 dimers bind in a sequential fashion. Binds GTP-bound translation factors.

In terms of biological role, forms part of the ribosomal stalk which helps the ribosome interact with GTP-bound translation factors. Is thus essential for accurate translation. This chain is Large ribosomal subunit protein bL12, found in Listeria monocytogenes serovar 1/2a (strain ATCC BAA-679 / EGD-e).